The following is a 385-amino-acid chain: MVKSYWKKFWGSNVTKSQHFIELNDIAYGNAKKIRVGIDAYRENVIVYRCVNLIAQSAGHVPWKVLKSKSGEVIANHPLNNLLKRPNPEKAGADFFSELISSMLLFGNSYILSTSDFRPKEIYLLPASATEAVLDQNVLVAYKYQSASGDKLYRIDPISKISRVLHLKNYHPTNHHYGLSSLEAASLPIDLHQQSSYWNHSLLQNGARPSGALIVKDSNGYLSDEQFERLQAQLSEKFTGSNNAGKPLLLEGGLGWQEMSINPKDMDFIQSKNSAAREIALAFGVPPQLLGINGDNTYSNMQEARLALWEETLIPLLDKIADNISNWFSYLFNEEITIDFDSDSISALTEKRENLWAKIANANFMTLNEKRAFVGLPKIKDGDSL.

It belongs to the phage portal family. HK97 subfamily.

This is an uncharacterized protein from Rickettsia bellii (strain RML369-C).